The following is a 180-amino-acid chain: NADH-quinone oxidoreductase subunit I (180 aa).

2 4Fe-4S ferredoxin-type domains span residues 44-74 (LNRY…VEGA) and 90-119 (RVYQ…MTTE). Residues cysteine 54, cysteine 57, cysteine 60, cysteine 64, cysteine 99, cysteine 102, cysteine 105, and cysteine 109 each coordinate [4Fe-4S] cluster. The tract at residues 145–180 (MQAPPHDMAPGKTDDDYYLGNVTPITPVPSGTEDAR) is disordered.

It belongs to the complex I 23 kDa subunit family. As to quaternary structure, NDH-1 is composed of 14 different subunits. Subunits NuoA, H, J, K, L, M, N constitute the membrane sector of the complex. It depends on [4Fe-4S] cluster as a cofactor.

It localises to the cell membrane. The enzyme catalyses a quinone + NADH + 5 H(+)(in) = a quinol + NAD(+) + 4 H(+)(out). Functionally, NDH-1 shuttles electrons from NADH, via FMN and iron-sulfur (Fe-S) centers, to quinones in the respiratory chain. The immediate electron acceptor for the enzyme in this species is believed to be menaquinone. Couples the redox reaction to proton translocation (for every two electrons transferred, four hydrogen ions are translocated across the cytoplasmic membrane), and thus conserves the redox energy in a proton gradient. This chain is NADH-quinone oxidoreductase subunit I, found in Mycolicibacterium smegmatis (strain ATCC 700084 / mc(2)155) (Mycobacterium smegmatis).